A 512-amino-acid polypeptide reads, in one-letter code: DNA damage-binding protein CMR1 (512 aa).

The interval 32-96 (SQIKREAGVE…IPNVNDNQLL (65 aa)) is disordered. Residues 34–46 (IKREAGVEDEHLD) are compositionally biased toward basic and acidic residues. Basic residues predominate over residues 47–60 (RKRKKKAGSAKKAV). WD repeat units lie at residues 189 to 230 (LTAE…PEDE), 241 to 281 (LFTK…SEEI), 289 to 329 (DDPL…TEIN), 333 to 373 (LSDK…NKPE), 390 to 429 (DSRLSVSAVSYSPMDETLVCNGYDDTIRLFDVSGTLPEDL), 442 to 481 (GRWTSILKARFKLNMDVFAIANMKRAIDIYTSSGVQLAHL), and 482 to 512 (PTATVPAVISWHPTQNWVVGGNSSGKAFLFT).

Belongs to the WD repeat DDB2/WDR76 family.

Its function is as follows. DNA-binding protein that binds to both single- and double-stranded DNA. Binds preferentially to UV-damaged DNA. May be involved in DNA-metabolic processes. The chain is DNA damage-binding protein CMR1 from Kluyveromyces lactis (strain ATCC 8585 / CBS 2359 / DSM 70799 / NBRC 1267 / NRRL Y-1140 / WM37) (Yeast).